An 89-amino-acid chain; its full sequence is NADH-ubiquinone oxidoreductase chain 4L (89 aa).

The next 3 helical transmembrane spans lie at 1–21, 22–42, and 55–75; these read MNLSLILFLIGILGFVLNRKN, IILMLISIEIILLSVTFLILI, and FAIYIITIAGAESAIGLGILV.

Belongs to the complex I subunit 4L family.

The protein resides in the mitochondrion membrane. It carries out the reaction a ubiquinone + NADH + 5 H(+)(in) = a ubiquinol + NAD(+) + 4 H(+)(out). Core subunit of the mitochondrial membrane respiratory chain NADH dehydrogenase (Complex I) that is believed to belong to the minimal assembly required for catalysis. Complex I functions in the transfer of electrons from NADH to the respiratory chain. The immediate electron acceptor for the enzyme is believed to be ubiquinone. This chain is NADH-ubiquinone oxidoreductase chain 4L (ND4L), found in Trichophyton rubrum (Athlete's foot fungus).